We begin with the raw amino-acid sequence, 264 residues long: Thymidylate synthase (264 aa).

Residue Arg-21 coordinates dUMP. Residue His-51 participates in (6R)-5,10-methylene-5,6,7,8-tetrahydrofolate binding. DUMP is bound at residue 126–127 (RR). The Nucleophile role is filled by Cys-146. Residues 166 to 169 (RSAD), Asn-177, and 207 to 209 (HLY) each bind dUMP. Asp-169 is a (6R)-5,10-methylene-5,6,7,8-tetrahydrofolate binding site. Ala-263 is a binding site for (6R)-5,10-methylene-5,6,7,8-tetrahydrofolate.

Belongs to the thymidylate synthase family. Bacterial-type ThyA subfamily. In terms of assembly, homodimer.

Its subcellular location is the cytoplasm. The enzyme catalyses dUMP + (6R)-5,10-methylene-5,6,7,8-tetrahydrofolate = 7,8-dihydrofolate + dTMP. It participates in pyrimidine metabolism; dTTP biosynthesis. Its function is as follows. Catalyzes the reductive methylation of 2'-deoxyuridine-5'-monophosphate (dUMP) to 2'-deoxythymidine-5'-monophosphate (dTMP) while utilizing 5,10-methylenetetrahydrofolate (mTHF) as the methyl donor and reductant in the reaction, yielding dihydrofolate (DHF) as a by-product. This enzymatic reaction provides an intracellular de novo source of dTMP, an essential precursor for DNA biosynthesis. This Legionella pneumophila (strain Lens) protein is Thymidylate synthase.